The chain runs to 81 residues: uncharacterized protein (81 aa).

This is an uncharacterized protein from Vaccinia virus (strain Copenhagen) (VACV).